We begin with the raw amino-acid sequence, 241 residues long: GTP cyclohydrolase III (241 aa).

It belongs to the archaeal-type GTP cyclohydrolase family.

The enzyme catalyses GTP + 3 H2O = 2-amino-5-formylamino-6-(5-phospho-D-ribosylamino)pyrimidin-4(3H)-one + 2 phosphate + 2 H(+). In terms of biological role, catalyzes the formation of 2-amino-5-formylamino-6-ribofuranosylamino-4(3H)-pyrimidinone ribonucleotide monophosphate and inorganic phosphate from GTP. Also has an independent pyrophosphate phosphohydrolase activity. This chain is GTP cyclohydrolase III, found in Aeropyrum pernix (strain ATCC 700893 / DSM 11879 / JCM 9820 / NBRC 100138 / K1).